The primary structure comprises 1668 residues: Chitin synthase chs-2 (1668 aa).

The span at 1–19 (MMNTLDHRPLGRMETMEGK) shows a compositional bias: basic and acidic residues. The interval 1–51 (MMNTLDHRPLGRMETMEGKPDEDEVPTSSNSDAKGKGYYYSSGTVPTDDST) is disordered. Over 1 to 116 (MMNTLDHRPL…HGFWHDASLQ (116 aa)) the chain is Cytoplasmic. A helical membrane pass occupies residues 117-137 (VLKLATFLVLFLLTLGSAVVA). The Extracellular segment spans residues 138–176 (KSTFILMTSAIGWGGQTITICNQVISEATQNTVKLKNAH). A helical transmembrane segment spans residues 177–197 (VVKWVWATLLALSAPEALCFV). Over 198–212 (RSMHRTMFRNVKRPT) the chain is Cytoplasmic. Residues 213-233 (FIQFVFVLIIETFHSIGVGIL) form a helical membrane-spanning segment. The Extracellular portion of the chain corresponds to 234-242 (VFRIFPDLD). A helical membrane pass occupies residues 243-263 (AVTAAQLTNAMCFVPAILSVI). The Cytoplasmic portion of the chain corresponds to 264 to 271 (SRKPNKSA). Residues 272–292 (LLLVIIDFAAIAAQSSGFWAL) traverse the membrane as a helical segment. Over 293–301 (PMFLPNLQK) the chain is Extracellular. Residues 302–322 (HLVAIPVSLTLISLAWWQNFV) form a helical membrane-spanning segment. Residues 323–347 (HRDSVFPPVRTLAKFAQRLSERRSK) are Cytoplasmic-facing. The helical transmembrane segment at 348–368 (TYAFVSLWKICIYVVCCFLFI) threads the bilayer. Over 369–487 (SSRMKIEDML…IYSNYVERNQ (119 aa)) the chain is Extracellular. N-linked (GlcNAc...) asparagine glycosylation is present at asparagine 396. A helical membrane pass occupies residues 488–508 (LTMAYDALWLVIFQFGAVFVC). Topologically, residues 509–522 (YHSSKFACKVMMQR) are cytoplasmic. The chain crosses the membrane as a helical span at residues 523-543 (MGFALPMALSVPVTVLLLSTN). The Extracellular portion of the chain corresponds to 544–576 (CRMRQKDSCYGTNVLTVELFWQCNGASMSLADF). Residues 577-597 (ILTPQTWIWLCWLASQFWITI) traverse the membrane as a helical segment. At 598–1045 (HLWNPKHERL…ISIWYIIYQL (448 aa)) the chain is on the cytoplasmic side. Residues 1046-1066 (VMLISSILGPGTIFVMIIGAI) form a helical membrane-spanning segment. The Extracellular segment spans residues 1067–1074 (SISFSIDT). A helical membrane pass occupies residues 1075 to 1095 (LISLVIVSIPVVVFIVVCLTA). Topologically, residues 1096–1100 (KPEHQ) are cytoplasmic. Residues 1101–1121 (LICAQTIGAIFAMLMTAVVVG) traverse the membrane as a helical segment. Residues 1122–1136 (TSLQLQKDGLLSPHS) are Extracellular-facing. A helical membrane pass occupies residues 1137-1157 (MFTVAVATSFLTAAILHPLEF). Threonine 1158 is a topological domain (cytoplasmic). A helical membrane pass occupies residues 1159–1179 (CIIPGTIYFLAIPCMYMLLPI). The Extracellular segment spans residues 1180 to 1375 (YSVCNMHTVS…RAGLIAIRNS (196 aa)). The segment at 1192-1216 (TREDPRPTEKNTLAKKTPGNLESGD) is disordered. Positions 1280–1335 (QIDKCSEADEDEQAEIEDALEMSNQSHAAKKNQKWKQAQSEAWLADKALKRAEREY) form a coiled coil. A glycan (N-linked (GlcNAc...) asparagine) is linked at asparagine 1303. A helical transmembrane segment spans residues 1376-1396 (HTVYFLMINIVFIISVLVLQI). Residues 1397–1440 (HKDCLNIEWPLGPKFNHTVRPCYANHDDNQKEEVWVMTRLQLEP) lie on the Cytoplasmic side of the membrane. Residues 1441-1461 (IGLVFLIFFVSILVIQFLAML) traverse the membrane as a helical segment. The Extracellular portion of the chain corresponds to 1462–1668 (CHRFGTLAHI…SSGDVELRRF (207 aa)). Residues 1625–1668 (RLFTAQQDQNSPTSDGNRRKSNSRPWDQPTSSATSSGDVELRRF) form a disordered region. Polar residues-rich tracts occupy residues 1628 to 1639 (TAQQDQNSPTSD) and 1647 to 1661 (SRPW…TSSG).

This sequence belongs to the chitin synthase family. Class IV subfamily.

It localises to the cell membrane. It carries out the reaction [(1-&gt;4)-N-acetyl-beta-D-glucosaminyl](n) + UDP-N-acetyl-alpha-D-glucosamine = [(1-&gt;4)-N-acetyl-beta-D-glucosaminyl](n+1) + UDP + H(+). May be involved in chitin synthesis in the pharynx during larval development. The protein is Chitin synthase chs-2 of Caenorhabditis elegans.